Here is a 479-residue protein sequence, read N- to C-terminus: ATP synthase subunit beta, chloroplastic (479 aa).

156-163 (GGAGVGKT) lines the ATP pocket.

Belongs to the ATPase alpha/beta chains family. In terms of assembly, F-type ATPases have 2 components, CF(1) - the catalytic core - and CF(0) - the membrane proton channel. CF(1) has five subunits: alpha(3), beta(3), gamma(1), delta(1), epsilon(1). CF(0) has four main subunits: a(1), b(1), b'(1) and c(9-12).

The protein localises to the plastid. It localises to the chloroplast thylakoid membrane. It carries out the reaction ATP + H2O + 4 H(+)(in) = ADP + phosphate + 5 H(+)(out). Produces ATP from ADP in the presence of a proton gradient across the membrane. The catalytic sites are hosted primarily by the beta subunits. In Trichomanes davallioides (Kilau fern), this protein is ATP synthase subunit beta, chloroplastic.